The following is a 475-amino-acid chain: Ribulose bisphosphate carboxylase large chain (475 aa).

The propeptide occupies 1–2 (MS). Proline 3 carries the post-translational modification N-acetylproline. N6,N6,N6-trimethyllysine is present on lysine 14. Substrate is bound by residues asparagine 123 and threonine 173. The active-site Proton acceptor is lysine 175. Lysine 177 is a substrate binding site. Mg(2+)-binding residues include lysine 201, aspartate 203, and glutamate 204. At lysine 201 the chain carries N6-carboxylysine. The Proton acceptor role is filled by histidine 294. Substrate-binding residues include arginine 295, histidine 327, and serine 379.

The protein belongs to the RuBisCO large chain family. Type I subfamily. As to quaternary structure, heterohexadecamer of 8 large chains and 8 small chains; disulfide-linked. The disulfide link is formed within the large subunit homodimers. The cofactor is Mg(2+). In terms of processing, the disulfide bond which can form in the large chain dimeric partners within the hexadecamer appears to be associated with oxidative stress and protein turnover.

It is found in the plastid. Its subcellular location is the chloroplast. It carries out the reaction 2 (2R)-3-phosphoglycerate + 2 H(+) = D-ribulose 1,5-bisphosphate + CO2 + H2O. The catalysed reaction is D-ribulose 1,5-bisphosphate + O2 = 2-phosphoglycolate + (2R)-3-phosphoglycerate + 2 H(+). RuBisCO catalyzes two reactions: the carboxylation of D-ribulose 1,5-bisphosphate, the primary event in carbon dioxide fixation, as well as the oxidative fragmentation of the pentose substrate in the photorespiration process. Both reactions occur simultaneously and in competition at the same active site. The chain is Ribulose bisphosphate carboxylase large chain from Alnus incana (White alder).